A 438-amino-acid chain; its full sequence is Asparagine--tRNA ligase (438 aa).

The protein belongs to the class-II aminoacyl-tRNA synthetase family. As to quaternary structure, homodimer.

It is found in the cytoplasm. It carries out the reaction tRNA(Asn) + L-asparagine + ATP = L-asparaginyl-tRNA(Asn) + AMP + diphosphate + H(+). This Thermus thermophilus (strain ATCC BAA-163 / DSM 7039 / HB27) protein is Asparagine--tRNA ligase.